Reading from the N-terminus, the 539-residue chain is Glutamyl-tRNA(Gln) amidotransferase subunit B, mitochondrial (539 aa).

The protein belongs to the GatB/GatE family. GatB subfamily. As to quaternary structure, subunit of the heterotrimeric GatFAB amidotransferase (AdT) complex, composed of A, B and F subunits.

The protein resides in the mitochondrion. It carries out the reaction L-glutamyl-tRNA(Gln) + L-glutamine + ATP + H2O = L-glutaminyl-tRNA(Gln) + L-glutamate + ADP + phosphate + H(+). Its function is as follows. Allows the formation of correctly charged Gln-tRNA(Gln) through the transamidation of misacylated Glu-tRNA(Gln) in the mitochondria. The reaction takes place in the presence of glutamine and ATP through an activated gamma-phospho-Glu-tRNA(Gln). The protein is Glutamyl-tRNA(Gln) amidotransferase subunit B, mitochondrial of Kluyveromyces lactis (strain ATCC 8585 / CBS 2359 / DSM 70799 / NBRC 1267 / NRRL Y-1140 / WM37) (Yeast).